Here is a 326-residue protein sequence, read N- to C-terminus: Transmembrane protein 171 (326 aa).

A run of 4 helical transmembrane segments spans residues 22–42 (IFFL…LSIF), 57–77 (MMLK…VILA), 114–134 (LIFG…GIWV), and 161–181 (FLSL…FFVV). Residues 229 to 326 (FPESSASAAA…LSPSSEPSPP (98 aa)) form a disordered region. The span at 230–240 (PESSASAAARS) shows a compositional bias: low complexity. Residues 257 to 266 (SIFQSGSPTP) show a composition bias toward polar residues. 2 stretches are compositionally biased toward low complexity: residues 288–302 (SSSE…LSEL) and 312–326 (ATTT…PSPP).

It is found in the membrane. This Bos taurus (Bovine) protein is Transmembrane protein 171 (TMEM171).